Here is a 71-residue protein sequence, read N- to C-terminus: Large ribosomal subunit protein uL29 (71 aa).

Belongs to the universal ribosomal protein uL29 family.

This Synechococcus sp. (strain RCC307) protein is Large ribosomal subunit protein uL29.